We begin with the raw amino-acid sequence, 339 residues long: Fructose-1,6-bisphosphatase isozyme 2 (339 aa).

The segment at 3–10 is important for interaction with ALDOA; sequence DRSPFETD. AMP is bound by residues Val18 and 28–32; that span reads TGELT. Asp69 and Glu98 together coordinate Mg(2+). 113–114 is a binding site for AMP; the sequence is KY. Mg(2+) is bound by residues Asp119, Leu121, and Asp122. Asp122 serves as a coordination point for substrate. An AMP-binding site is contributed by Arg141. The short motif at 204-208 is the Nuclear localization signal element; the sequence is KKKGK. Position 213–216 (213–216) interacts with substrate; the sequence is NEGY. Phosphotyrosine occurs at positions 216 and 219. Residues 245-249, Tyr265, and Lys275 each bind substrate; that span reads YVGSM. Glu281 serves as a coordination point for Mg(2+).

This sequence belongs to the FBPase class 1 family. In terms of assembly, homotetramer. Interacts with ALDOA; the interaction blocks inhibition by physiological concentrations of AMP and reduces inhibition by Ca(2+). Interacts with alpha-actinin and F-actin. Mg(2+) serves as cofactor. As to expression, expressed in muscle, intestine, brain and placenta and very weakly in liver.

The protein resides in the cell junction. It is found in the cytoplasm. It localises to the nucleus. The protein localises to the myofibril. Its subcellular location is the sarcomere. The protein resides in the z line. The enzyme catalyses beta-D-fructose 1,6-bisphosphate + H2O = beta-D-fructose 6-phosphate + phosphate. It functions in the pathway carbohydrate biosynthesis; gluconeogenesis. With respect to regulation, subject to complex allosteric regulation. The enzyme can assume an active R-state, or an inactive T-state. Intermediate conformations may exist. AMP acts as an allosteric inhibitor. Fructose 2,6-bisphosphate acts as a competitive inhibitor. Strongly inhibited by Ca(2+). Catalyzes the hydrolysis of fructose 1,6-bisphosphate to fructose 6-phosphate in the presence of divalent cations and probably participates in glycogen synthesis from carbohydrate precursors, such as lactate. In Mus musculus (Mouse), this protein is Fructose-1,6-bisphosphatase isozyme 2 (Fbp2).